A 540-amino-acid polypeptide reads, in one-letter code: Glucose-6-phosphate isomerase (540 aa).

The active-site Proton donor is the Glu350. Catalysis depends on residues His381 and Lys503.

The protein belongs to the GPI family.

It is found in the cytoplasm. It catalyses the reaction alpha-D-glucose 6-phosphate = beta-D-fructose 6-phosphate. It functions in the pathway carbohydrate biosynthesis; gluconeogenesis. Its pathway is carbohydrate degradation; glycolysis; D-glyceraldehyde 3-phosphate and glycerone phosphate from D-glucose: step 2/4. Catalyzes the reversible isomerization of glucose-6-phosphate to fructose-6-phosphate. This is Glucose-6-phosphate isomerase from Burkholderia mallei (strain NCTC 10247).